A 512-amino-acid polypeptide reads, in one-letter code: Mucin-13 (512 aa).

The signal sequence occupies residues 1–18 (MKAIIHLTLLALLSVNTA). Topologically, residues 19–421 (TNQGNSADAV…GLDCKDKFQL (403 aa)) are extracellular. Positions 22–38 (GNSADAVTTTETATSGP) are enriched in polar residues. Disordered stretches follow at residues 22–67 (GNSA…PTAT) and 133–176 (MVPS…PSNP). The segment covering 53 to 67 (TASTTANTPSFPTAT) has biased composition (low complexity). A compositionally biased stretch (polar residues) spans 135-176 (PSETQSNNEMSPTTEDNQSSGPPTGTALLETSTLNSTGPSNP). N-linked (GlcNAc...) asparagine glycosylation is found at Asn151 and Asn169. The 39-residue stretch at 173–211 (PSNPCQDDPCADNSLCVKLHNTSFCLCLEGYYYNSSTCK) folds into the EGF-like 1 domain. Intrachain disulfides connect Cys177–Cys188, Cys182–Cys197, and Cys199–Cys210. N-linked (GlcNAc...) asparagine glycans are attached at residues Asn193, Asn206, Asn284, and Asn332. In terms of domain architecture, SEA spans 212–336 (KGKVFPGKIS…DYYGCNQTAD (125 aa)). EGF-like domains are found at residues 322–361 (LTLRCDYYGCNQTADDCLNGLACDCKSDLQRPNPQSPFCV) and 363–404 (SSLK…GNCQ). 6 disulfides stabilise this stretch: Cys326–Cys338, Cys331–Cys344, Cys346–Cys360, Cys367–Cys378, Cys371–Cys389, and Cys391–Cys403. Residues 422–442 (ILTIVGTIAGIVILSMIIALI) traverse the membrane as a helical segment. The Cytoplasmic portion of the chain corresponds to 443-512 (VTARSNNKTK…RHSSMPRPDY (70 aa)). A compositionally biased stretch (polar residues) spans 493–505 (RDSQMQNPYSRHS). The interval 493–512 (RDSQMQNPYSRHSSMPRPDY) is disordered.

In terms of assembly, homodimer of beta subunits. Cleaved into two subunits, alpha and beta, probably between the first EGF domain and the SEA domain. Beta subunit contains the cytoplasmic tail and alpha subunit the extracellular tail. The homooligomerization into dimers is dependent on intrachain disulfide bonds. Post-translationally, highly N-glycosylated. As to expression, highly expressed in epithelial tissues, particularly those of the gastrointestinal and respiratory tracts, such as large intestine and trachea, followed by kidney, small intestine, appendix and stomach.

The protein localises to the cell membrane. The protein resides in the apical cell membrane. It is found in the secreted. Its function is as follows. Epithelial and hemopoietic transmembrane mucin that may play a role in cell signaling. This chain is Mucin-13 (MUC13), found in Homo sapiens (Human).